The following is a 91-amino-acid chain: Acylphosphatase (91 aa).

The 87-residue stretch at 5-91 folds into the Acylphosphatase-like domain; it reads WKKWNVRGVV…QEYKDFHVEF (87 aa). Residues arginine 20 and asparagine 38 contribute to the active site.

This sequence belongs to the acylphosphatase family.

It catalyses the reaction an acyl phosphate + H2O = a carboxylate + phosphate + H(+). In Fervidobacterium nodosum (strain ATCC 35602 / DSM 5306 / Rt17-B1), this protein is Acylphosphatase (acyP).